Reading from the N-terminus, the 141-residue chain is Large ribosomal subunit protein uL11 (141 aa).

This sequence belongs to the universal ribosomal protein uL11 family. Part of the ribosomal stalk of the 50S ribosomal subunit. Interacts with L10 and the large rRNA to form the base of the stalk. L10 forms an elongated spine to which L12 dimers bind in a sequential fashion forming a multimeric L10(L12)X complex. One or more lysine residues are methylated.

In terms of biological role, forms part of the ribosomal stalk which helps the ribosome interact with GTP-bound translation factors. The polypeptide is Large ribosomal subunit protein uL11 (Synechococcus sp. (strain JA-3-3Ab) (Cyanobacteria bacterium Yellowstone A-Prime)).